The primary structure comprises 492 residues: Trehalose-6-phosphate synthase (492 aa).

Residue R25 participates in D-glucose 6-phosphate binding. Residue 45-46 (GG) coordinates UDP-alpha-D-glucose. D-glucose 6-phosphate is bound by residues Y101 and D155. Positions 297 and 302 each coordinate UDP-alpha-D-glucose. R335 is a D-glucose 6-phosphate binding site. 400-404 (LVAKE) provides a ligand contact to UDP-alpha-D-glucose.

Belongs to the glycosyltransferase 20 family. As to quaternary structure, homotetramer.

It carries out the reaction ADP-alpha-D-glucose + D-glucose 6-phosphate = alpha,alpha-trehalose 6-phosphate + ADP + H(+). The enzyme catalyses CDP-alpha-D-glucose + D-glucose 6-phosphate = alpha,alpha-trehalose 6-phosphate + CDP + H(+). The catalysed reaction is GDP-alpha-D-glucose + D-glucose 6-phosphate = alpha,alpha-trehalose 6-phosphate + GDP + H(+). It catalyses the reaction TDP-alpha-D-glucose + D-glucose 6-phosphate = 5-methyl-UDP + alpha,alpha-trehalose 6-phosphate + H(+). It carries out the reaction D-glucose 6-phosphate + UDP-alpha-D-glucose = alpha,alpha-trehalose 6-phosphate + UDP + H(+). The protein operates within glycan biosynthesis; trehalose biosynthesis. In terms of biological role, probably involved in the osmoprotection via the biosynthesis of trehalose and in the production of glycogen and alpha-glucan via the TreS-Pep2 branch involved in the biosynthesis of maltose-1-phosphate (M1P). Catalyzes the transfer of glucose from UDP-glucose (UDP-Glc) to D-glucose 6-phosphate (Glc-6-P) to form trehalose-6-phosphate. Probably also able to use ADP-Glc, CDP-Glc, GDP-Glc and TDP-Glc as glucosyl donors. The polypeptide is Trehalose-6-phosphate synthase (Mycobacterium avium (strain 104)).